Consider the following 194-residue polypeptide: Imidazoleglycerol-phosphate dehydratase (194 aa).

It belongs to the imidazoleglycerol-phosphate dehydratase family.

It localises to the cytoplasm. It carries out the reaction D-erythro-1-(imidazol-4-yl)glycerol 3-phosphate = 3-(imidazol-4-yl)-2-oxopropyl phosphate + H2O. It participates in amino-acid biosynthesis; L-histidine biosynthesis; L-histidine from 5-phospho-alpha-D-ribose 1-diphosphate: step 6/9. The sequence is that of Imidazoleglycerol-phosphate dehydratase from Bacillus cereus (strain AH820).